We begin with the raw amino-acid sequence, 109 residues long: Ribonuclease P protein component (109 aa).

Belongs to the RnpA family. As to quaternary structure, consists of a catalytic RNA component (M1 or rnpB) and a protein subunit.

It catalyses the reaction Endonucleolytic cleavage of RNA, removing 5'-extranucleotides from tRNA precursor.. Its function is as follows. RNaseP catalyzes the removal of the 5'-leader sequence from pre-tRNA to produce the mature 5'-terminus. It can also cleave other RNA substrates such as 4.5S RNA. The protein component plays an auxiliary but essential role in vivo by binding to the 5'-leader sequence and broadening the substrate specificity of the ribozyme. This Mycoplasma mycoides subsp. mycoides SC (strain CCUG 32753 / NCTC 10114 / PG1) protein is Ribonuclease P protein component.